Here is a 324-residue protein sequence, read N- to C-terminus: Glyoxylate/hydroxypyruvate reductase B (324 aa).

Residues arginine 237 and glutamate 266 contribute to the active site. Histidine 285 functions as the Proton donor in the catalytic mechanism.

Belongs to the D-isomer specific 2-hydroxyacid dehydrogenase family. GhrB subfamily. In terms of assembly, homodimer.

It localises to the cytoplasm. The catalysed reaction is glycolate + NADP(+) = glyoxylate + NADPH + H(+). It carries out the reaction (R)-glycerate + NAD(+) = 3-hydroxypyruvate + NADH + H(+). The enzyme catalyses (R)-glycerate + NADP(+) = 3-hydroxypyruvate + NADPH + H(+). Catalyzes the NADPH-dependent reduction of glyoxylate and hydroxypyruvate into glycolate and glycerate, respectively. The sequence is that of Glyoxylate/hydroxypyruvate reductase B from Shigella boydii serotype 4 (strain Sb227).